An 883-amino-acid polypeptide reads, in one-letter code: MAEDKVREFAETVGIPVERLVSQLEAAGISGRGPEDPLSDLDKATLLEYLRKGRDGGEQDDDQAPSKITLRRKKVSTLKMPASGGGGSGARGPRQTRTVNVEVRKKRTYVKRSVVEAEESKHDVERLERALIEDRKRAEERARREAEEAEARRREQEEAERRQAEAEALRQAEAEREATAETAGVADEADKAEPQPDPEAARLAAEKEEARRREEEKERRRLEQEARREREAEERAARKTGATAPAAKGKQKKGRESLSMGAGKPGRRGGKKGGRRAASGGEAAKQLQHGFAKPTQPVVREVEIPESITVGDLAQKMSVKAAVLIKEMMKQGVMATINQALDQDTAVLLVEEMGHKPVIVRADALEEEVLQDTSQAQEGDKAPRPPVVTVMGHVDHGKTSLLDNIRRAKVADAEAGGITQHIGAYHVETDRGMVTFLDTPGHEAFTAMRARGAQLTDIVVLVVAADDGVMPQTEEAVRHAKAAEVPMVVAVNKIDKPDADPDRVKQELSQMEVIPEEWGGDVQFIHVSAKQGEGLDDLLEAILLQAELMELGAVAEGNASGIVLESSLDKGRGPVATVLVQSGLLKKGDSLLCGTEYGRVRALIDETGKRVDEAGPSIPVVVLGLSGLPSAGDDMVVVDDEKKAREVAEMRKERQRDKRLAQQQAARMENLFNQMKEDEVNTVNLVVKADVQGSAEALQQSLANLSTDDIQVKVISSGVGAINESDVNLALASNAILIGFNVRADAAARRLVQENDVDLHYYSVIYDAIEQVKNAISGMLEPELEEHIIGLAEVKDVFRSSKLGAVAGCLVTEGAVRRKNPIRVLRDNVVIYEGELESLRRHKDDVTEVKSGTECGIGVKNYNDVRIGDQIECYERVEVRREL.

Disordered regions lie at residues 52–102 and 115–297; these read KGRD…VNVE and VEAE…PTQP. Basic and acidic residues-rich tracts occupy residues 115-179 and 204-237; these read VEAE…REAT and AAEK…ERAA. Residues 239-248 are compositionally biased toward low complexity; sequence KTGATAPAAK. The segment covering 265 to 275 has biased composition (basic residues); it reads PGRRGGKKGGR. Residues 276–285 are compositionally biased toward low complexity; the sequence is RAASGGEAAK. The tr-type G domain maps to 383 to 550; that stretch reads PRPPVVTVMG…AILLQAELME (168 aa). Positions 392–399 are G1; that stretch reads GHVDHGKT. Position 392-399 (392-399) interacts with GTP; the sequence is GHVDHGKT. Positions 417 to 421 are G2; it reads GITQH. Positions 438–441 are G3; sequence DTPG. Residues 438-442 and 492-495 each bind GTP; these read DTPGH and NKID. A G4 region spans residues 492 to 495; it reads NKID. The G5 stretch occupies residues 528–530; that stretch reads SAK.

Belongs to the TRAFAC class translation factor GTPase superfamily. Classic translation factor GTPase family. IF-2 subfamily.

It is found in the cytoplasm. One of the essential components for the initiation of protein synthesis. Protects formylmethionyl-tRNA from spontaneous hydrolysis and promotes its binding to the 30S ribosomal subunits. Also involved in the hydrolysis of GTP during the formation of the 70S ribosomal complex. The chain is Translation initiation factor IF-2 from Alkalilimnicola ehrlichii (strain ATCC BAA-1101 / DSM 17681 / MLHE-1).